The sequence spans 492 residues: MEPSSKKLTGRLMLAVGGAVLGSLQFGYNTGVINAPQKVIEEFYNQTWVHRYGESILPTTLTTLWSLSVAIFSVGGMIGSFSVGLFVNRFGRRNSMLMMNLLAFVSAVLMGFSKLGKSFEMLILGRFIIGVYCGLTTGFVPMYVGEVSPTALRGALGTLHQLGIVVGILIAQVFGLDSIMGNKDLWPLLLSIIFIPALLQCIVLPFCPESPRFLLINRNEENRAKSVLKKLRGTADVTHDLQEMKEESRQMMREKKVTILELFRSPAYRQPILIAVVLQLSQQLSGINAVFYYSTSIFEKAGVQQPVYATIGSGIVNTAFTVVSLFVVERAGRRTLHLIGLAGMAGCAILMTIALALLEQLPWMSYLSIVAIFGFVAFFEVGPGPIPWFIVAELFSQGPRPAAIAVAGFSNWTSNFIVGMCFQYVEQLCGPYVFIIFTVLLVLFFIFTYFKVPETKGRTFDEIASGFRQGGASQSDKTPEELFHPLGADSQV.

Methionine 1 is modified (N-acetylmethionine). At methionine 1 to arginine 11 the chain is on the cytoplasmic side. The chain crosses the membrane as a helical span at residues leucine 12–isoleucine 33. At asparagine 34–serine 66 the chain is on the extracellular side. The N-linked (GlcNAc...) asparagine glycan is linked to asparagine 45. A helical transmembrane segment spans residues leucine 67 to valine 87. At asparagine 88–phenylalanine 90 the chain is on the cytoplasmic side. A helical transmembrane segment spans residues glycine 91–phenylalanine 112. Residues serine 113–glutamate 120 are Extracellular-facing. Residues methionine 121–valine 144 form a helical membrane-spanning segment. Threonine 137 is a binding site for cytochalasin B. Over glycine 145–alanine 155 the chain is Cytoplasmic. A helical membrane pass occupies residues leucine 156–leucine 176. Over aspartate 177–leucine 185 the chain is Extracellular. A helical membrane pass occupies residues tryptophan 186 to phenylalanine 206. At cysteine 207–proline 271 the chain is on the cytoplasmic side. Residue serine 226 is modified to Phosphoserine; by PKC/PRKCB. A helical membrane pass occupies residues isoleucine 272 to tyrosine 293. Glutamine 282 is a cytochalasin B binding site. Residues glutamine 282–glutamine 283 and asparagine 288 contribute to the D-glucose site. At serine 294–proline 306 the chain is on the extracellular side. Residues valine 307–valine 328 form a helical membrane-spanning segment. Asparagine 317 contributes to the D-glucose binding site. Topologically, residues glutamate 329–arginine 334 are cytoplasmic. Residues threonine 335–leucine 355 form a helical membrane-spanning segment. The Extracellular portion of the chain corresponds to alanine 356 to serine 365. The chain crosses the membrane as a helical span at residues tyrosine 366–tryptophan 388. Glutamate 380 serves as a coordination point for D-glucose. Tryptophan 388 is a binding site for cytochalasin B. Over phenylalanine 389–proline 401 the chain is Cytoplasmic. A helical transmembrane segment spans residues alanine 402–phenylalanine 422. Asparagine 411 is a cytochalasin B binding site. The Extracellular segment spans residues glutamine 423–cysteine 429. Residues glycine 430–phenylalanine 450 form a helical membrane-spanning segment. Residues lysine 451–valine 492 are Cytoplasmic-facing. Position 465 is a phosphoserine (serine 465). The interval arginine 468–valine 492 is disordered. The residue at position 478 (threonine 478) is a Phosphothreonine. Serine 490 carries the phosphoserine modification.

Belongs to the major facilitator superfamily. Sugar transporter (TC 2.A.1.1) family. Glucose transporter subfamily. Interacts with GIPC (via PDZ domain). Found in a complex with ADD2, DMTN and SLC2A1. Interacts (via C-terminus cytoplasmic region) with DMTN isoform 2. Interacts with SNX27; the interaction is required when endocytosed to prevent degradation in lysosomes and promote recycling to the plasma membrane. Interacts with STOM. Interacts with SGTA (via Gln-rich region). Interacts with isoform 1 of BSG. In terms of processing, phosphorylation at Ser-226 by PKC promotes glucose uptake by increasing cell membrane localization. Detected in erythrocytes (at protein level). Expressed at variable levels in many human tissues.

The protein localises to the cell membrane. It is found in the melanosome. Its subcellular location is the photoreceptor inner segment. The enzyme catalyses D-glucose(out) = D-glucose(in). It participates in carbohydrate degradation. The uptake of glucose is inhibited by cytochalasin B and Phe-amide core-scaffold inhibitors GLUT-i1 and GLUT-i2. These inhibitors bind in the central cavity of the inward-open state and overlap the glucose-binding site. Glucose uptake is increased in response to phorbol ester 12-O-tetradecanoylphorbol-13-acetate (TPA) treatment: TPA-induced glucose uptake requires phosphorylation at Ser-226. Interacts with SMIM43; the interaction may promote SLC2A1-mediated glucose transport to meet the energy needs of mesendoderm differentiation. Functionally, facilitative glucose transporter, which is responsible for constitutive or basal glucose uptake. Has a very broad substrate specificity; can transport a wide range of aldoses including both pentoses and hexoses. Most important energy carrier of the brain: present at the blood-brain barrier and assures the energy-independent, facilitative transport of glucose into the brain. In association with BSG and NXNL1, promotes retinal cone survival by increasing glucose uptake into photoreceptors. Required for mesendoderm differentiation. This chain is Solute carrier family 2, facilitated glucose transporter member 1, found in Homo sapiens (Human).